A 416-amino-acid chain; its full sequence is 3-isopropylmalate dehydratase large subunit (416 aa).

Residues Cys-297, Cys-357, and Cys-360 each contribute to the [4Fe-4S] cluster site.

The protein belongs to the aconitase/IPM isomerase family. LeuC type 2 subfamily. As to quaternary structure, heterodimer of LeuC and LeuD. Requires [4Fe-4S] cluster as cofactor.

The enzyme catalyses (2R,3S)-3-isopropylmalate = (2S)-2-isopropylmalate. The protein operates within amino-acid biosynthesis; L-leucine biosynthesis; L-leucine from 3-methyl-2-oxobutanoate: step 2/4. Functionally, catalyzes the isomerization between 2-isopropylmalate and 3-isopropylmalate, via the formation of 2-isopropylmaleate. The protein is 3-isopropylmalate dehydratase large subunit of Methanoregula boonei (strain DSM 21154 / JCM 14090 / 6A8).